Consider the following 314-residue polypeptide: Ribosomal protein L11 methyltransferase (314 aa).

S-adenosyl-L-methionine is bound by residues Thr-161, Gly-182, Asp-204, and Asn-248.

Belongs to the methyltransferase superfamily. PrmA family.

It is found in the cytoplasm. It carries out the reaction L-lysyl-[protein] + 3 S-adenosyl-L-methionine = N(6),N(6),N(6)-trimethyl-L-lysyl-[protein] + 3 S-adenosyl-L-homocysteine + 3 H(+). Functionally, methylates ribosomal protein L11. The sequence is that of Ribosomal protein L11 methyltransferase from Listeria monocytogenes serotype 1/2a (strain 10403S).